Consider the following 1558-residue polypeptide: Hybrid PKS-NRPS synthetase TAS1 (1558 aa).

The condensation (C) domain stretch occupies residues 27–392 (YPMTKAQESL…RGLETPRAQV (366 aa)). The segment at 522 to 919 (TYKELNERSN…TITDVMPEVT (398 aa)) is adenylation (A) domain. A disordered region spans residues 995-1028 (TSGSSSSATPSLVSSGSTTCRSPSTSSCSDSRSA). Residues 1027-1104 (SASPAITSAV…GQVDLLCGSE (78 aa)) form the Carrier domain. Position 1063 is an O-(pantetheine 4'-phosphoryl)serine (serine 1063). Positions 1116–1144 (LGRGRTKSPAKIVDSQGRSSPSTIPSGGR) are disordered. Residues 1131–1140 (QGRSSPSTIP) are compositionally biased toward polar residues. In terms of domain architecture, Ketosynthase family 3 (KS3) spans 1145–1558 (KSEIAIVGIS…GVNAHCVLRS (414 aa)). Active-site for beta-ketoacyl synthase activity residues include cysteine 1308, histidine 1444, and asparagine 1484.

It in the N-terminal section; belongs to the NRP synthetase family. The cofactor is pantetheine 4'-phosphate.

It carries out the reaction acetoacetyl-CoA + L-isoleucine + ATP = tenuazonic acid + AMP + diphosphate + CoA + 2 H(+). Functionally, hybrid PKS-NRPS synthetase that mediates the biosynthesis of the toxin tenuazonic acid (TeA), an inhibitor of protein biosynthesis on ribosomes by suppressing the release of new protein. TAS1 alone is sufficient for TeA synthesis via the condensation of isoleucine (Ile) with acetoacetyl-CoA by the N-terminal NRPS module and subsequent cyclization conducted by the C-terminal KS domain. The sequence is that of Hybrid PKS-NRPS synthetase TAS1 from Gloeophyllum trabeum (strain ATCC 11539 / FP-39264 / Madison 617) (Brown rot fungus).